The sequence spans 484 residues: Magnesium transporter MRS2-3 (484 aa).

Disordered regions lie at residues 1–40 (MRGA…GRKK) and 141–186 (TKPQ…QSLE). Residues 10–24 (NFSTNPSTPNTGQPT) are compositionally biased toward polar residues. Positions 203–275 (ACLEAASSSL…LLDDDEDMAE (73 aa)) form a coiled coil. Residues 286–320 (LEDSSNSSMNESDTFEVDLPQGDEDDRLPPEFASE) are disordered. Residues 298–311 (DTFEVDLPQGDEDD) show a composition bias toward acidic residues. Residues 416–436 (GVMLTTATLVMSAFIAVAGVF) form a helical membrane-spanning segment. The short motif at 437 to 439 (GMN) is the Required for magnesium transport activity element. Residues 455–475 (FIWTVIGGSIGSICLYVGAIG) traverse the membrane as a helical segment.

This sequence belongs to the CorA metal ion transporter (MIT) (TC 1.A.35.5) family. Expressed in the whole plant.

The protein localises to the membrane. Functionally, magnesium transporter that may mediate the influx of magnesium. The chain is Magnesium transporter MRS2-3 (MRS2-3) from Arabidopsis thaliana (Mouse-ear cress).